A 216-amino-acid chain; its full sequence is Squamosa promoter-binding-like protein 13 (216 aa).

Residues 32–110 (GDGGAALPSP…PSGGGGGPRC (79 aa)) are disordered. The segment covering 67–91 (SSSAAVAAGASSSSSSSSVAAAARR) has biased composition (low complexity). A compositionally biased stretch (gly residues) spans 94–108 (GRAGGGAPSGGGGGP). An SBP-type zinc finger spans residues 107 to 184 (GPRCQVERCG…AGHNERRRKS (78 aa)). Zn(2+) contacts are provided by Cys-110, Cys-115, Cys-132, His-135, Cys-151, Cys-154, His-158, and Cys-170. The Bipartite nuclear localization signal signature appears at 167 to 183 (KRSCRRRLAGHNERRRK). A disordered region spans residues 175-216 (AGHNERRRKSAADTAHGENCRHADQDAGRSHQGTGNPPFQIR). The segment covering 189-203 (AHGENCRHADQDAGR) has biased composition (basic and acidic residues). Polar residues predominate over residues 205–216 (HQGTGNPPFQIR).

Ubiquitous.

It is found in the nucleus. In terms of biological role, trans-acting factor that binds specifically to the consensus nucleotide sequence 5'-TNCGTACAA-3'. May be involved in panicle development. This chain is Squamosa promoter-binding-like protein 13 (SPL13), found in Oryza sativa subsp. japonica (Rice).